A 272-amino-acid chain; its full sequence is 3-methyl-2-oxobutanoate hydroxymethyltransferase (272 aa).

The Mg(2+) site is built by Asp-42 and Asp-86. Residues 42 to 43 (DS), Asp-86, and Lys-116 contribute to the 3-methyl-2-oxobutanoate site. Residue Glu-118 participates in Mg(2+) binding. Residue Glu-185 is the Proton acceptor of the active site. A disordered region spans residues 251–272 (LKEQRDQRATPTTPPPPPAPDC). Over residues 262–272 (TTPPPPPAPDC) the composition is skewed to pro residues.

The protein belongs to the PanB family. Homodecamer; pentamer of dimers. It depends on Mg(2+) as a cofactor.

Its subcellular location is the cytoplasm. It catalyses the reaction 3-methyl-2-oxobutanoate + (6R)-5,10-methylene-5,6,7,8-tetrahydrofolate + H2O = 2-dehydropantoate + (6S)-5,6,7,8-tetrahydrofolate. It participates in cofactor biosynthesis; (R)-pantothenate biosynthesis; (R)-pantoate from 3-methyl-2-oxobutanoate: step 1/2. Its function is as follows. Catalyzes the reversible reaction in which hydroxymethyl group from 5,10-methylenetetrahydrofolate is transferred onto alpha-ketoisovalerate to form ketopantoate. This Synechococcus sp. (strain CC9311) protein is 3-methyl-2-oxobutanoate hydroxymethyltransferase.